A 147-amino-acid chain; its full sequence is Transcriptional regulator FurA (147 aa).

A DNA-binding region spans residues 1-85; that stretch reads MSSIPDYAEQ…GSVARYESRV (85 aa). Residues H34 and E82 each contribute to the Zn(2+) site. The segment at 86-147 is dimerization; sequence GDNHHHIVCR…SISDTSRSHP (62 aa). Fe cation contacts are provided by D87 and H89. Zn(2+) contacts are provided by H91, C94, C97, and D102. E109 is a Fe cation binding site.

Belongs to the Fur family. Homodimer.

It localises to the cytoplasm. In terms of biological role, represses transcription of the catalase-peroxidase gene katG and its own transcription by binding to the promoter region in a redox-dependent manner. This chain is Transcriptional regulator FurA (furA), found in Mycobacterium bovis (strain ATCC BAA-935 / AF2122/97).